The sequence spans 167 residues: MLIVVNDSPFYKGDTAILRQLVGGDRISCKLKHANVRHEFSYSGWVLIVGNEYLGMSETSGALARRMIVFPARNAVHLKKFLIKEEHGLFMGPLAEEISEIAKWALSMPDQDATEIMRDPEIHCPSLSEENKLCRENLNHISACLMKTPCSSSKPSQGICHAHDPIS.

The protein localises to the mitochondrion. This is an uncharacterized protein from Marchantia polymorpha (Common liverwort).